Consider the following 1051-residue polypeptide: Kinesin-like protein KIN-4B (1051 aa).

The tract at residues 1–21 (MESHSSLSSSSSSSPPSSLSS) is disordered. In terms of domain architecture, Kinesin motor spans 25–380 (CVKVAVNVRP…LKYANRARNI (356 aa)). 104-111 (GQTGSGKT) contributes to the ATP binding site. Coiled coils occupy residues 414-448 (ATSSEEVQVMREKIMKLESANEELSRELHIYRSKR) and 540-644 (RQHF…KMKQ). Positions 916–925 (SSSYSGSSRS) are enriched in low complexity. Disordered regions lie at residues 916 to 946 (SSSYSGSSRSSSKHYGDNNASDDPSSPSSTY) and 1029 to 1051 (MSKSHHDDEDDHSWNRHSMFQGA).

It belongs to the TRAFAC class myosin-kinesin ATPase superfamily. Kinesin family. KIN-4 subfamily. As to quaternary structure, homodimer.

Kinesin-like motor protein involved in the control of the oriented deposition of cellulose microfibrils. The polypeptide is Kinesin-like protein KIN-4B (Arabidopsis thaliana (Mouse-ear cress)).